The primary structure comprises 254 residues: UPF0603 protein YdjH (254 aa).

A signal peptide spans 1–29 (MRGFFGKAIFVVLAVFIMMPLLGIEAVRA). A helical transmembrane segment spans residues 166-186 (IFFTWWFQLIAAIAVGGIAVS). Basic and acidic residues predominate over residues 223–235 (VTRERKPSDKDSG). The tract at residues 223–254 (VTRERKPSDKDSGSDGGVTKGGTSYSGSRGSF) is disordered. Residues 243–254 (GGTSYSGSRGSF) show a composition bias toward polar residues.

It belongs to the UPF0603 family.

Its subcellular location is the cell membrane. The polypeptide is UPF0603 protein YdjH (ydjH) (Bacillus subtilis (strain 168)).